We begin with the raw amino-acid sequence, 318 residues long: Isoflavone reductase (318 aa).

NADP(+) contacts are provided by residues 11–17 (GPTGAIG), Arg-36, and Lys-44. The Proton acceptor role is filled by Lys-144. Arg-148 contacts NADP(+).

The protein belongs to the NmrA-type oxidoreductase family. Isoflavone reductase subfamily.

It carries out the reaction (3R)-vestitone + NADP(+) = 2'-hydroxyformononetin + NADPH + 2 H(+). Its pathway is phytoalexin biosynthesis; pterocarpan phytoalexin biosynthesis. In terms of biological role, reduces achiral isoflavones to chiral isoflavanones during the biosynthesis of chiral pterocarpan phytoalexins. The reduction product is a third isomer, which represents the penultimate intermediate in the synthesis of the phytoalexin (-)-medicarpin, the major phytoalexin in Alfalfa. This Medicago sativa (Alfalfa) protein is Isoflavone reductase.